A 510-amino-acid polypeptide reads, in one-letter code: Coatomer subunit delta (510 aa).

In terms of domain architecture, MHD spans 270–510; the sequence is MESVHMKIEE…TFLVDKYEIL (241 aa).

Belongs to the adaptor complexes medium subunit family. Delta-COP subfamily. In terms of assembly, oligomeric complex that consists of at least the alpha, beta, beta', gamma, delta, epsilon and zeta subunits.

It is found in the cytoplasm. Its subcellular location is the golgi apparatus membrane. The protein localises to the cytoplasmic vesicle. The protein resides in the COPI-coated vesicle membrane. The coatomer is a cytosolic protein complex that binds to dilysine motifs and reversibly associates with Golgi non-clathrin-coated vesicles, which further mediate biosynthetic protein transport from the ER, via the Golgi up to the trans Golgi network. Coatomer complex is required for budding from Golgi membranes, and is essential for the retrograde Golgi-to-ER transport of dilysine-tagged proteins. In mammals, the coatomer can only be recruited by membranes associated to ADP-ribosylation factors (ARFs), which are small GTP-binding proteins; the complex also influences the Golgi structural integrity, as well as the processing, activity, and endocytic recycling of LDL receptors. The sequence is that of Coatomer subunit delta (ARCN1) from Gallus gallus (Chicken).